A 157-amino-acid chain; its full sequence is Thiocyanate hydrolase subunit beta (157 aa).

As to quaternary structure, heterododecamer consisting of 4 alpha, 4 beta, and 4 gamma subunits.

The catalysed reaction is thiocyanate + H2O + 2 H(+) = carbonyl sulfide + NH4(+). The protein operates within organosulfur degradation; thiocyanate degradation. Involved in the degradation of thiocyanate. This is Thiocyanate hydrolase subunit beta (scnB) from Thiobacillus thioparus.